The primary structure comprises 206 residues: Small ribosomal subunit protein uS4 (206 aa).

The S4 RNA-binding domain occupies 96–156 (CRLDNVVYRM…EKAKNQLRIV (61 aa)).

This sequence belongs to the universal ribosomal protein uS4 family. In terms of assembly, part of the 30S ribosomal subunit. Contacts protein S5. The interaction surface between S4 and S5 is involved in control of translational fidelity.

Its function is as follows. One of the primary rRNA binding proteins, it binds directly to 16S rRNA where it nucleates assembly of the body of the 30S subunit. Functionally, with S5 and S12 plays an important role in translational accuracy. The protein is Small ribosomal subunit protein uS4 of Pseudomonas savastanoi pv. phaseolicola (strain 1448A / Race 6) (Pseudomonas syringae pv. phaseolicola (strain 1448A / Race 6)).